The sequence spans 346 residues: Phosphoribosylformylglycinamidine cyclo-ligase (346 aa).

It belongs to the AIR synthase family.

Its subcellular location is the cytoplasm. The enzyme catalyses 2-formamido-N(1)-(5-O-phospho-beta-D-ribosyl)acetamidine + ATP = 5-amino-1-(5-phospho-beta-D-ribosyl)imidazole + ADP + phosphate + H(+). The protein operates within purine metabolism; IMP biosynthesis via de novo pathway; 5-amino-1-(5-phospho-D-ribosyl)imidazole from N(2)-formyl-N(1)-(5-phospho-D-ribosyl)glycinamide: step 2/2. The chain is Phosphoribosylformylglycinamidine cyclo-ligase from Photobacterium profundum (strain SS9).